Here is a 172-residue protein sequence, read N- to C-terminus: Adenine phosphoribosyltransferase (172 aa).

Belongs to the purine/pyrimidine phosphoribosyltransferase family. Homodimer.

The protein resides in the cytoplasm. It catalyses the reaction AMP + diphosphate = 5-phospho-alpha-D-ribose 1-diphosphate + adenine. It functions in the pathway purine metabolism; AMP biosynthesis via salvage pathway; AMP from adenine: step 1/1. Functionally, catalyzes a salvage reaction resulting in the formation of AMP, that is energically less costly than de novo synthesis. This Prochlorococcus marinus (strain MIT 9303) protein is Adenine phosphoribosyltransferase.